The following is a 443-amino-acid chain: tRNA modification GTPase MnmE (443 aa).

Positions 23, 82, and 121 each coordinate (6S)-5-formyl-5,6,7,8-tetrahydrofolate. Residues 215 to 364 (GTSIVLAGHP…LKQFIQKWIQ (150 aa)) form the TrmE-type G domain. N225 contributes to the K(+) binding site. Residues 225–230 (NAGKSS), 244–250 (TDIPGTT), and 269–272 (DSAG) each bind GTP. A Mg(2+)-binding site is contributed by S229. K(+) contacts are provided by T244, I246, and T249. T250 is a Mg(2+) binding site. K443 serves as a coordination point for (6S)-5-formyl-5,6,7,8-tetrahydrofolate.

It belongs to the TRAFAC class TrmE-Era-EngA-EngB-Septin-like GTPase superfamily. TrmE GTPase family. Homodimer. Heterotetramer of two MnmE and two MnmG subunits. The cofactor is K(+).

It localises to the cytoplasm. In terms of biological role, exhibits a very high intrinsic GTPase hydrolysis rate. Involved in the addition of a carboxymethylaminomethyl (cmnm) group at the wobble position (U34) of certain tRNAs, forming tRNA-cmnm(5)s(2)U34. The chain is tRNA modification GTPase MnmE from Chlamydia felis (strain Fe/C-56) (Chlamydophila felis).